We begin with the raw amino-acid sequence, 130 residues long: Small ribosomal subunit protein uS8 (130 aa).

This sequence belongs to the universal ribosomal protein uS8 family. Part of the 30S ribosomal subunit.

Its function is as follows. One of the primary rRNA binding proteins, it binds directly to 16S rRNA central domain where it helps coordinate assembly of the platform of the 30S subunit. The protein is Small ribosomal subunit protein uS8 of Methanotorris igneus (Methanococcus igneus).